A 275-amino-acid chain; its full sequence is 4-hydroxy-tetrahydrodipicolinate reductase (275 aa).

NAD(+)-binding positions include 13 to 18 (GAAGKM), 108 to 110 (GTT), and 134 to 137 (APNF). The active-site Proton donor/acceptor is histidine 164. Histidine 165 serves as a coordination point for (S)-2,3,4,5-tetrahydrodipicolinate. The active-site Proton donor is lysine 168. Residue 174-175 (GT) participates in (S)-2,3,4,5-tetrahydrodipicolinate binding.

This sequence belongs to the DapB family.

It is found in the cytoplasm. The catalysed reaction is (S)-2,3,4,5-tetrahydrodipicolinate + NAD(+) + H2O = (2S,4S)-4-hydroxy-2,3,4,5-tetrahydrodipicolinate + NADH + H(+). The enzyme catalyses (S)-2,3,4,5-tetrahydrodipicolinate + NADP(+) + H2O = (2S,4S)-4-hydroxy-2,3,4,5-tetrahydrodipicolinate + NADPH + H(+). The protein operates within amino-acid biosynthesis; L-lysine biosynthesis via DAP pathway; (S)-tetrahydrodipicolinate from L-aspartate: step 4/4. Catalyzes the conversion of 4-hydroxy-tetrahydrodipicolinate (HTPA) to tetrahydrodipicolinate. The protein is 4-hydroxy-tetrahydrodipicolinate reductase of Synechocystis sp. (strain ATCC 27184 / PCC 6803 / Kazusa).